Reading from the N-terminus, the 1791-residue chain is Brefeldin A-inhibited guanine nucleotide-exchange protein 2 (1791 aa).

Met-1 carries the N-acetylmethionine modification. The DCB; DCB:DCB domain and DCB:HUS domain interaction stretch occupies residues 2-224; it reads QESQTKSMFV…KPQSPVIQAT (223 aa). 2 disordered regions span residues 208–292 and 311–350; these read LEKP…DNGA and AAEK…IADD. 3 positions are modified to phosphoserine: Ser-214, Ser-218, and Ser-227. The segment covering 214 to 225 has biased composition (polar residues); that stretch reads SKPQSPVIQATA. Polar residues predominate over residues 233 to 243; the sequence is LKQSQAQSKPT. Thr-244 is subject to Phosphothreonine. Basic and acidic residues predominate over residues 244 to 257; that stretch reads TPEKTELPNGDHAR. The residue at position 277 (Ser-277) is a Phosphoserine. Phosphoserine occurs at positions 355 and 356. The segment at 515 to 535 is HUS; DCB:HUS domain interaction; that stretch reads ADAQCVVDIYVNYDCDLNAAN. Ser-621 is subject to Phosphoserine. Thr-623 is subject to Phosphothreonine. Ser-624 carries the phosphoserine modification. Residue Thr-633 is modified to Phosphothreonine. Positions 661-792 constitute an SEC7 domain; that stretch reads FNKKPKRGIQ…IIMLTTDLHS (132 aa). A phosphoserine mark is found at Ser-707, Ser-1518, Ser-1520, Ser-1521, Ser-1532, Ser-1535, Ser-1541, and Ser-1788.

As to quaternary structure, homodimer. Interacts with ARFGEF1/BIG1; both proteins are probably part of the same or very similar macromolecular complexes. Interacts with PRKAR1A, PRKAR2A, PRKAR1B, PRKAR2B, PPP1CC, PDE3A, TNFRSF1A, MYCBP and EXOC7. Interacts with GABRB1, GABRB2 and GABRB3. In terms of processing, in vitro phosphorylated by PKA reducing its GEF activity and dephosphorylated by phosphatase PP1. Expressed in brain (at protein level).

The protein resides in the cytoplasm. It is found in the membrane. Its subcellular location is the golgi apparatus. It localises to the perinuclear region. The protein localises to the trans-Golgi network. The protein resides in the endosome. It is found in the cytoskeleton. Its subcellular location is the microtubule organizing center. It localises to the centrosome. The protein localises to the cell projection. The protein resides in the dendrite. It is found in the cytoplasmic vesicle. Its subcellular location is the synapse. With respect to regulation, inhibited by brefeldin A. In terms of biological role, promotes guanine-nucleotide exchange on ARF1 and ARF3 and to a lower extent on ARF5 and ARF6. Promotes the activation of ARF1/ARF5/ARF6 through replacement of GDP with GTP. Involved in the regulation of Golgi vesicular transport. Required for the integrity of the endosomal compartment. Involved in trafficking from the trans-Golgi network (TGN) to endosomes and is required for membrane association of the AP-1 complex and GGA1. Seems to be involved in recycling of the transferrin receptor from recycling endosomes to the plasma membrane. Probably is involved in the exit of GABA(A) receptors from the endoplasmic reticulum. Involved in constitutive release of tumor necrosis factor receptor 1 via exosome-like vesicles; the function seems to involve PKA and specifically PRKAR2B. Proposed to act as A kinase-anchoring protein (AKAP) and may mediate crosstalk between Arf and PKA pathways. In Rattus norvegicus (Rat), this protein is Brefeldin A-inhibited guanine nucleotide-exchange protein 2 (Arfgef2).